The primary structure comprises 86 residues: Toxin Aam2 (86 aa).

An N-terminal signal peptide occupies residues 1-20 (MNYLITISLALLLMTGVASG). In terms of domain architecture, LCN-type CS-alpha/beta spans 22–84 (RDGYIADAGN…VPIKVPGKCN (63 aa)). 4 disulfides stabilise this stretch: C32/C83, C36/C56, C42/C66, and C46/C68. N84 is subject to Asparagine amide.

It belongs to the long (4 C-C) scorpion toxin superfamily. Sodium channel inhibitor family. Alpha subfamily. Expressed by the venom gland.

The protein resides in the secreted. In terms of biological role, alpha toxins bind voltage-independently at site-3 of sodium channels (Nav) and inhibit the inactivation of the activated channels, thereby blocking neuronal transmission. This is Toxin Aam2 from Androctonus amoreuxi (African fattail scorpion).